The primary structure comprises 177 residues: ATP synthase subunit delta (177 aa).

Belongs to the ATPase delta chain family. In terms of assembly, F-type ATPases have 2 components, F(1) - the catalytic core - and F(0) - the membrane proton channel. F(1) has five subunits: alpha(3), beta(3), gamma(1), delta(1), epsilon(1). F(0) has three main subunits: a(1), b(2) and c(10-14). The alpha and beta chains form an alternating ring which encloses part of the gamma chain. F(1) is attached to F(0) by a central stalk formed by the gamma and epsilon chains, while a peripheral stalk is formed by the delta and b chains.

The protein localises to the cell inner membrane. Functionally, f(1)F(0) ATP synthase produces ATP from ADP in the presence of a proton or sodium gradient. F-type ATPases consist of two structural domains, F(1) containing the extramembraneous catalytic core and F(0) containing the membrane proton channel, linked together by a central stalk and a peripheral stalk. During catalysis, ATP synthesis in the catalytic domain of F(1) is coupled via a rotary mechanism of the central stalk subunits to proton translocation. In terms of biological role, this protein is part of the stalk that links CF(0) to CF(1). It either transmits conformational changes from CF(0) to CF(1) or is implicated in proton conduction. The polypeptide is ATP synthase subunit delta (Yersinia enterocolitica serotype O:8 / biotype 1B (strain NCTC 13174 / 8081)).